Reading from the N-terminus, the 152-residue chain is Transcription elongation factor Spt5 (152 aa).

Residues 99–128 (PGDVVEVISGPFRGTQAQVIRVEEAKGEVV) enclose the KOW domain.

It belongs to the archaeal Spt5 family. Heterodimer composed of Spt4 and Spt5. Interacts with RNA polymerase (RNAP).

Functionally, stimulates transcription elongation. The polypeptide is Transcription elongation factor Spt5 (Saccharolobus solfataricus (strain ATCC 35092 / DSM 1617 / JCM 11322 / P2) (Sulfolobus solfataricus)).